Reading from the N-terminus, the 200-residue chain is Large ribosomal subunit protein uL4 (200 aa).

Positions 43-71 (RAQKTRAEVSGSGKKPWRQKGTGRARSGD) are disordered.

The protein belongs to the universal ribosomal protein uL4 family. Part of the 50S ribosomal subunit.

One of the primary rRNA binding proteins, this protein initially binds near the 5'-end of the 23S rRNA. It is important during the early stages of 50S assembly. It makes multiple contacts with different domains of the 23S rRNA in the assembled 50S subunit and ribosome. Functionally, forms part of the polypeptide exit tunnel. In Actinobacillus pleuropneumoniae serotype 5b (strain L20), this protein is Large ribosomal subunit protein uL4.